A 480-amino-acid chain; its full sequence is Endothelial transcription factor GATA-2 (480 aa).

Ser73 bears the Phosphoserine mark. The residue at position 86 (Arg86) is an Asymmetric dimethylarginine. Residues 166–208 (SGSHLFGFPPTPPKEVSPDPSTTGAASPASSSAGGSVARGEDK) form a disordered region. The segment covering 183–201 (PDPSTTGAASPASSSAGGS) has biased composition (low complexity). Phosphoserine is present on Ser192. GATA-type zinc fingers lie at residues 295–319 (CVNC…CNAC) and 349–373 (CANC…CNAC). A Glycyl lysine isopeptide (Lys-Gly) (interchain with G-Cter in SUMO2) cross-link involves residue Lys389. The disordered stretch occupies residues 457–480 (TPIHPSSSLSFGHPHPSSMVTAMG).

In terms of assembly, interacts with BRD3. Interacts with AR and CCAR1. Interacts with MDFIC.

The protein localises to the nucleus. Functionally, transcriptional activator which regulates endothelin-1 gene expression in endothelial cells. Binds to the consensus sequence 5'-AGATAG-3'. The protein is Endothelial transcription factor GATA-2 (Gata2) of Mus musculus (Mouse).